Reading from the N-terminus, the 198-residue chain is Clytin (198 aa).

Positions 1-9 (MADTASKYA) are excised as a propeptide. EF-hand domains lie at 20–55 (KWVNRHKFMFNFLDINGDGKITLDEIVSKASDDICA), 60–95 (TPEQTKRHQDAVEAFFKKIGMDYGKEVEFPAFVDGW), 119–148 (EAVFDIFDKDGSGSISLDEWKAYGRISGIC), and 149–184 (SSDEDAEKTFKHCDLDNSGKLDVDEMTRQHLGFWYT). 5 residues coordinate Ca(2+): Asp33, Asn35, Asp37, Lys39, and Glu44. Positions 126, 128, 130, 132, 137, 162, 164, 166, 168, and 173 each coordinate Ca(2+).

The protein belongs to the aequorin family.

Its function is as follows. Ca(2+)-dependent bioluminescence photoprotein. Displays an emission peak at 470 nm (blue light). Trace amounts of calcium ion trigger the intramolecular oxidation of the chromophore, coelenterazine into coelenteramide and CO(2) with the concomitant emission of light. The chain is Clytin from Clytia gregaria (Gregarious jellyfish).